The primary structure comprises 123 residues: Large ribosomal subunit protein uL18 (123 aa).

Belongs to the universal ribosomal protein uL18 family. In terms of assembly, part of the 50S ribosomal subunit; part of the 5S rRNA/L5/L18/L25 subcomplex. Contacts the 5S and 23S rRNAs.

In terms of biological role, this is one of the proteins that bind and probably mediate the attachment of the 5S RNA into the large ribosomal subunit, where it forms part of the central protuberance. The polypeptide is Large ribosomal subunit protein uL18 (Chlamydia abortus (strain DSM 27085 / S26/3) (Chlamydophila abortus)).